We begin with the raw amino-acid sequence, 492 residues long: N-succinylglutamate 5-semialdehyde dehydrogenase (492 aa).

Position 220–225 (220–225) interacts with NAD(+); sequence GSASTG. Catalysis depends on residues Glu-243 and Cys-277.

The protein belongs to the aldehyde dehydrogenase family. AstD subfamily.

The enzyme catalyses N-succinyl-L-glutamate 5-semialdehyde + NAD(+) + H2O = N-succinyl-L-glutamate + NADH + 2 H(+). It participates in amino-acid degradation; L-arginine degradation via AST pathway; L-glutamate and succinate from L-arginine: step 4/5. Functionally, catalyzes the NAD-dependent reduction of succinylglutamate semialdehyde into succinylglutamate. In Salmonella gallinarum (strain 287/91 / NCTC 13346), this protein is N-succinylglutamate 5-semialdehyde dehydrogenase.